The following is a 302-amino-acid chain: Sulfate adenylyltransferase subunit 2 (302 aa).

This sequence belongs to the PAPS reductase family. CysD subfamily. Heterodimer composed of CysD, the smaller subunit, and CysN.

It catalyses the reaction sulfate + ATP + H(+) = adenosine 5'-phosphosulfate + diphosphate. The protein operates within sulfur metabolism; hydrogen sulfide biosynthesis; sulfite from sulfate: step 1/3. In terms of biological role, with CysN forms the ATP sulfurylase (ATPS) that catalyzes the adenylation of sulfate producing adenosine 5'-phosphosulfate (APS) and diphosphate, the first enzymatic step in sulfur assimilation pathway. APS synthesis involves the formation of a high-energy phosphoric-sulfuric acid anhydride bond driven by GTP hydrolysis by CysN coupled to ATP hydrolysis by CysD. In Yersinia pestis bv. Antiqua (strain Nepal516), this protein is Sulfate adenylyltransferase subunit 2.